The chain runs to 513 residues: Putative thymidine phosphorylase (513 aa).

Belongs to the thymidine/pyrimidine-nucleoside phosphorylase family. Type 2 subfamily.

The catalysed reaction is thymidine + phosphate = 2-deoxy-alpha-D-ribose 1-phosphate + thymine. In Rhodopseudomonas palustris (strain BisB18), this protein is Putative thymidine phosphorylase.